The primary structure comprises 549 residues: DNA mismatch repair protein MutL (549 aa).

The protein belongs to the DNA mismatch repair MutL/HexB family.

In terms of biological role, this protein is involved in the repair of mismatches in DNA. It is required for dam-dependent methyl-directed DNA mismatch repair. May act as a 'molecular matchmaker', a protein that promotes the formation of a stable complex between two or more DNA-binding proteins in an ATP-dependent manner without itself being part of a final effector complex. The chain is DNA mismatch repair protein MutL from Pseudothermotoga lettingae (strain ATCC BAA-301 / DSM 14385 / NBRC 107922 / TMO) (Thermotoga lettingae).